Here is a 316-residue protein sequence, read N- to C-terminus: 4-diphosphocytidyl-2-C-methyl-D-erythritol kinase (316 aa).

Lys-11 is a catalytic residue. 99–109 (PVAAGLAGGST) is an ATP binding site. The active site involves Asp-141.

The protein belongs to the GHMP kinase family. IspE subfamily.

It catalyses the reaction 4-CDP-2-C-methyl-D-erythritol + ATP = 4-CDP-2-C-methyl-D-erythritol 2-phosphate + ADP + H(+). It functions in the pathway isoprenoid biosynthesis; isopentenyl diphosphate biosynthesis via DXP pathway; isopentenyl diphosphate from 1-deoxy-D-xylulose 5-phosphate: step 3/6. Catalyzes the phosphorylation of the position 2 hydroxy group of 4-diphosphocytidyl-2C-methyl-D-erythritol. This chain is 4-diphosphocytidyl-2-C-methyl-D-erythritol kinase, found in Gloeothece citriformis (strain PCC 7424) (Cyanothece sp. (strain PCC 7424)).